The sequence spans 167 residues: ATP synthase subunit b (167 aa).

A helical membrane pass occupies residues 7–25; sequence SFLLAVSFVIFIYLIYRPA.

This sequence belongs to the ATPase B chain family. In terms of assembly, F-type ATPases have 2 components, F(1) - the catalytic core - and F(0) - the membrane proton channel. F(1) has five subunits: alpha(3), beta(3), gamma(1), delta(1), epsilon(1). F(0) has three main subunits: a(1), b(2) and c(10-14). The alpha and beta chains form an alternating ring which encloses part of the gamma chain. F(1) is attached to F(0) by a central stalk formed by the gamma and epsilon chains, while a peripheral stalk is formed by the delta and b chains.

Its subcellular location is the cell inner membrane. F(1)F(0) ATP synthase produces ATP from ADP in the presence of a proton or sodium gradient. F-type ATPases consist of two structural domains, F(1) containing the extramembraneous catalytic core and F(0) containing the membrane proton channel, linked together by a central stalk and a peripheral stalk. During catalysis, ATP synthesis in the catalytic domain of F(1) is coupled via a rotary mechanism of the central stalk subunits to proton translocation. Its function is as follows. Component of the F(0) channel, it forms part of the peripheral stalk, linking F(1) to F(0). This Rickettsia typhi (strain ATCC VR-144 / Wilmington) protein is ATP synthase subunit b.